A 692-amino-acid polypeptide reads, in one-letter code: Polyribonucleotide nucleotidyltransferase (692 aa).

Positions 484 and 490 each coordinate Mg(2+). Positions 551 to 614 constitute a KH domain; sequence PKYFIHKISQ…ALVERVKSIT (64 aa). The S1 motif domain occupies 620–688; the sequence is GAVYTGKVKT…NRGRIRLSRK (69 aa).

It belongs to the polyribonucleotide nucleotidyltransferase family. Mg(2+) serves as cofactor.

The protein resides in the cytoplasm. It carries out the reaction RNA(n+1) + phosphate = RNA(n) + a ribonucleoside 5'-diphosphate. Its function is as follows. Involved in mRNA degradation. Catalyzes the phosphorolysis of single-stranded polyribonucleotides processively in the 3'- to 5'-direction. This chain is Polyribonucleotide nucleotidyltransferase, found in Desulfotalea psychrophila (strain LSv54 / DSM 12343).